A 111-amino-acid polypeptide reads, in one-letter code: MRLITLFLLLLLLAIQYPLWLGKGGWLRVWDMQKQVTAQNQRNAELKQRNTKLEGEVKDLKEGTGAIEERARYELGMVKDDEGFVQFVAPAPKTSETPLPPPPPAGQQAHH.

The Cytoplasmic portion of the chain corresponds to 1–3 (MRL). Residues 4-21 (ITLFLLLLLLAIQYPLWL) form a helical membrane-spanning segment. Residues 22–111 (GKGGWLRVWD…PPPAGQQAHH (90 aa)) are Periplasmic-facing. Positions 31 to 64 (DMQKQVTAQNQRNAELKQRNTKLEGEVKDLKEGT) form a coiled coil. The disordered stretch occupies residues 89–111 (APAPKTSETPLPPPPPAGQQAHH).

It belongs to the FtsB family. Part of a complex composed of FtsB, FtsL and FtsQ.

It localises to the cell inner membrane. In terms of biological role, essential cell division protein. May link together the upstream cell division proteins, which are predominantly cytoplasmic, with the downstream cell division proteins, which are predominantly periplasmic. The chain is Cell division protein FtsB from Ralstonia pickettii (strain 12J).